The chain runs to 519 residues: Xylose import ATP-binding protein XylG (519 aa).

ABC transporter domains lie at Leu6–Glu245 and Leu262–Ala507. Residue Gly38–Ser45 participates in ATP binding.

The protein belongs to the ABC transporter superfamily. Xylose importer (TC 3.A.1.2.4) family. In terms of assembly, the complex is composed of two ATP-binding proteins (XylG), two transmembrane proteins (XylH) and a solute-binding protein (XylF).

Its subcellular location is the cell inner membrane. The enzyme catalyses D-xylose(out) + ATP + H2O = D-xylose(in) + ADP + phosphate + H(+). In terms of biological role, part of the ABC transporter complex XylFGH involved in xylose import. Responsible for energy coupling to the transport system. The polypeptide is Xylose import ATP-binding protein XylG (Burkholderia cenocepacia (strain HI2424)).